Reading from the N-terminus, the 1472-residue chain is ABC multidrug transporter atrI (1472 aa).

A disordered region spans residues 1–28 (MRRSNVVPVHSLTSSTNTGRDSRGEKYD). Positions 134–384 (FRRETWNFRN…FERQGWFCPP (251 aa)) constitute an ABC transporter 1 domain. N-linked (GlcNAc...) asparagine glycans are attached at residues Asn143, Asn277, Asn308, and Asn332. Transmembrane regions (helical) follow at residues 506–526 (ILAL…AGFY), 530–550 (ATLF…INSL), 580–600 (IPVK…LSGL), 605–625 (SQFF…SAVF), 639–659 (MTLA…VVPV), 664–684 (PWFK…ILIA), and 744–764 (FGIL…ATEL). A compositionally biased stretch (basic and acidic residues) spans 784–793 (AHLKNGHEPG). Residues 784–821 (AHLKNGHEPGADEEAGAGKTVVSSSAEENKQDQGITSI) are disordered. The segment covering 804–821 (VVSSSAEENKQDQGITSI) has biased composition (polar residues). An ABC transporter 2 domain is found at 828–1070 (FTWRDVVYDI…TLLKYFESHG (243 aa)). Residue 864–871 (GVSGAGKT) coordinates ATP. The next 6 membrane-spanning stretches (helical) occupy residues 1168–1188 (YIAA…FSFF), 1204–1224 (VFML…LFIT), 1244–1264 (FMIA…ILVF), 1282–1302 (LVLL…DFVI), 1309–1329 (ETAG…NGVM), and 1337–1357 (GFWI…GMAA). N-linked (GlcNAc...) asparagine glycosylation occurs at Asn1402. Residues 1433–1453 (FGIFWAYVVFDIAVAVMLYYC) form a helical membrane-spanning segment. An N-linked (GlcNAc...) asparagine glycan is attached at Asn1460.

The protein belongs to the ABC transporter superfamily. ABCG family. PDR (TC 3.A.1.205) subfamily.

The protein localises to the cell membrane. The enzyme catalyses itraconazole(in) + ATP + H2O = itraconazole(out) + ADP + phosphate + H(+). It carries out the reaction voriconazole(in) + ATP + H2O = voriconazole(out) + ADP + phosphate + H(+). The catalysed reaction is fluconazole(in) + ATP + H2O = fluconazole(out) + ADP + phosphate + H(+). Pleiotropic ABC efflux transporter involved in the basal level of azole susceptibility. Confers resistance to fluconazole, itraconazole and voriconazole. The sequence is that of ABC multidrug transporter atrI from Aspergillus fumigatus (strain ATCC MYA-4609 / CBS 101355 / FGSC A1100 / Af293) (Neosartorya fumigata).